The primary structure comprises 360 residues: S-adenosylmethionine:tRNA ribosyltransferase-isomerase (360 aa).

It belongs to the QueA family. Monomer.

The protein resides in the cytoplasm. It carries out the reaction 7-aminomethyl-7-carbaguanosine(34) in tRNA + S-adenosyl-L-methionine = epoxyqueuosine(34) in tRNA + adenine + L-methionine + 2 H(+). It functions in the pathway tRNA modification; tRNA-queuosine biosynthesis. Transfers and isomerizes the ribose moiety from AdoMet to the 7-aminomethyl group of 7-deazaguanine (preQ1-tRNA) to give epoxyqueuosine (oQ-tRNA). This Rhodopseudomonas palustris (strain BisB5) protein is S-adenosylmethionine:tRNA ribosyltransferase-isomerase.